A 170-amino-acid polypeptide reads, in one-letter code: Peptide deformylase (170 aa).

Cys-91 and His-133 together coordinate Fe cation. The active site involves Glu-134. His-137 contacts Fe cation.

Belongs to the polypeptide deformylase family. Fe(2+) serves as cofactor.

The enzyme catalyses N-terminal N-formyl-L-methionyl-[peptide] + H2O = N-terminal L-methionyl-[peptide] + formate. Functionally, removes the formyl group from the N-terminal Met of newly synthesized proteins. Requires at least a dipeptide for an efficient rate of reaction. N-terminal L-methionine is a prerequisite for activity but the enzyme has broad specificity at other positions. The polypeptide is Peptide deformylase (Histophilus somni (strain 2336) (Haemophilus somnus)).